We begin with the raw amino-acid sequence, 255 residues long: ParA family protein CT_582 (255 aa).

The protein belongs to the ParA family.

The chain is ParA family protein CT_582 from Chlamydia trachomatis serovar D (strain ATCC VR-885 / DSM 19411 / UW-3/Cx).